Consider the following 105-residue polypeptide: UPF0235 protein RP839 (105 aa).

This sequence belongs to the UPF0235 family.

This is UPF0235 protein RP839 from Rickettsia prowazekii (strain Madrid E).